Here is a 357-residue protein sequence, read N- to C-terminus: GDP-mannose transporter 2 (357 aa).

The Cytoplasmic segment spans residues 1–43 (MASTRNGISKDELLPTYELQSQRDVENSGSVTSFASKISNNAA). The chain crosses the membrane as a helical span at residues 44 to 64 (AAVLAYCLSSISMTLVNKYVV). The Lumenal portion of the chain corresponds to 65–68 (SGAS). A helical transmembrane segment spans residues 69–89 (WNLSFLYLAIQSFIGTVAIMV). Residues 90 to 107 (CKKAGLIQNLGLFDLKKA) lie on the Cytoplasmic side of the membrane. The helical transmembrane segment at 108 to 128 (QTWLPISLLLVGMIYTGNKAL) threads the bilayer. Position 129 (Q129) is a topological domain, lumenal. A helical membrane pass occupies residues 130–150 (FLSVPVYTIFKNLTIIVIAYG). At 151–161 (EVFMVGGSVKP) the chain is on the cytoplasmic side. A helical membrane pass occupies residues 162–182 (LALLSFGLMVLSSVVAAWADI). Topologically, residues 183–196 (QIATAATAKASSDS) are lumenal. Residues 197–217 (AVATLSALNAGYAWMGTNVVF) form a helical membrane-spanning segment. At 218-238 (SASYALGMRRVIKKTNFDNWD) the chain is on the cytoplasmic side. Residues 239 to 259 (VMFYNNLLSVPILLLSSLLVE) form a helical membrane-spanning segment. Topologically, residues 260 to 277 (DWSSENLQRNFPAESRQS) are lumenal. A helical transmembrane segment spans residues 278–298 (LVIGIFYSGVAAIFISYCTAW). Residues 299–306 (CVRATSST) lie on the Cytoplasmic side of the membrane. Residues 307-327 (TYAMVGALNKLPLAVAGIVFF) traverse the membrane as a helical segment. Residues 328-332 (AAPVT) are Lumenal-facing. A helical membrane pass occupies residues 333-352 (FGSVSAIVLGFISGLVYTWA). The Cytoplasmic segment spans residues 353-357 (KSTGA).

It belongs to the TPT transporter family. SLC35D subfamily. In terms of assembly, homooligomer.

The protein localises to the golgi apparatus membrane. It localises to the cytoplasmic vesicle membrane. It is found in the endoplasmic reticulum membrane. Involved in the import of GDP-mannose from the cytoplasm into the Golgi lumen. This is GDP-mannose transporter 2 (gmt2) from Emericella nidulans (strain FGSC A4 / ATCC 38163 / CBS 112.46 / NRRL 194 / M139) (Aspergillus nidulans).